A 94-amino-acid chain; its full sequence is MKISEEEVRHVAKLARLNLTDEEVAMFSRQVGDILDYVDQLNTVDTEGVEGASHAISVNNAFREDKVKDSMDPDLALSNAPEREDTDIIVPKVI.

This sequence belongs to the GatC family. As to quaternary structure, heterotrimer of A, B and C subunits.

The enzyme catalyses L-glutamyl-tRNA(Gln) + L-glutamine + ATP + H2O = L-glutaminyl-tRNA(Gln) + L-glutamate + ADP + phosphate + H(+). It carries out the reaction L-aspartyl-tRNA(Asn) + L-glutamine + ATP + H2O = L-asparaginyl-tRNA(Asn) + L-glutamate + ADP + phosphate + 2 H(+). Its function is as follows. Allows the formation of correctly charged Asn-tRNA(Asn) or Gln-tRNA(Gln) through the transamidation of misacylated Asp-tRNA(Asn) or Glu-tRNA(Gln) in organisms which lack either or both of asparaginyl-tRNA or glutaminyl-tRNA synthetases. The reaction takes place in the presence of glutamine and ATP through an activated phospho-Asp-tRNA(Asn) or phospho-Glu-tRNA(Gln). This Desulfatibacillum aliphaticivorans protein is Aspartyl/glutamyl-tRNA(Asn/Gln) amidotransferase subunit C.